A 48-amino-acid polypeptide reads, in one-letter code: uncharacterized protein (48 aa).

Positions 1–48 (MSRRMGGGMPKINLSGAIPNNNTSTPSTPTLRSSVSVSSSNSRGLFLA) are disordered. Residues 20–48 (NNNTSTPSTPTLRSSVSVSSSNSRGLFLA) are compositionally biased toward low complexity.

This is an uncharacterized protein from Dictyostelium discoideum (Social amoeba).